We begin with the raw amino-acid sequence, 228 residues long: 2,3-bisphosphoglycerate-dependent phosphoglycerate mutase (228 aa).

Substrate is bound by residues 8-15 (RHGQSQWN), 21-22 (TG), Arg60, 87-90 (ERHY), Lys98, 114-115 (RR), and 180-181 (GN). Catalysis depends on His9, which acts as the Tele-phosphohistidine intermediate. Residue Glu87 is the Proton donor/acceptor of the active site.

This sequence belongs to the phosphoglycerate mutase family. BPG-dependent PGAM subfamily. In terms of assembly, homodimer.

The enzyme catalyses (2R)-2-phosphoglycerate = (2R)-3-phosphoglycerate. Its pathway is carbohydrate degradation; glycolysis; pyruvate from D-glyceraldehyde 3-phosphate: step 3/5. Its function is as follows. Catalyzes the interconversion of 2-phosphoglycerate and 3-phosphoglycerate. The polypeptide is 2,3-bisphosphoglycerate-dependent phosphoglycerate mutase (Sphingopyxis alaskensis (strain DSM 13593 / LMG 18877 / RB2256) (Sphingomonas alaskensis)).